The primary structure comprises 4700 residues: StAR-related lipid transfer protein 9 (4700 aa).

One can recognise a Kinesin motor domain in the interval 3 to 384 (NVQVAVRVRP…LRYASSAKNI (382 aa)). 103–110 (GQTGSGKT) lines the ATP pocket. The segment covering 310–328 (GDSGILSSPSGTSSGGAPS) has biased composition (low complexity). A disordered region spans residues 310–331 (GDSGILSSPSGTSSGGAPSRRQ). Positions 498 to 569 (LKEGTTKIGR…LTQGAVITLG (72 aa)) constitute an FHA domain. Composition is skewed to basic and acidic residues over residues 631-646 (QCDEDHQTPRDGETSH) and 867-877 (TSEKTSSEEHL). 4 disordered regions span residues 631–652 (QCDEDHQTPRDGETSHRAQIQQ), 851–880 (WDPSTTLPPRPDPTHQTSEKTSSEEHLPQA), 1057–1104 (KKSS…SDTD), and 1128–1188 (ERKW…GFTA). A compositionally biased stretch (acidic residues) spans 1134–1146 (PEPENSESDDSQL). Position 1203 is a phosphoserine (Ser1203). Disordered stretches follow at residues 1939 to 1976 (MPGESAVSLKSRSVDRRVSSPVMVAQGGGPTPKWEGKN), 2014 to 2043 (ERNPSECKSQEMLNPNREPSGKKQNKRVNN), 2088 to 2179 (DQKE…PARD), 2254 to 2290 (ESQVAEHVSSSNQEEPKAQGKVEEMPMQRGGSLQEEN), 2377 to 2403 (GVEHQDQSTETRSHSPEGNVRGRSSEA), 2416 to 2444 (MGSHSQSGVPESIPLGTEDRISASTSPQD), 2479 to 2539 (LNKV…PRLL), 2589 to 2613 (RVAGRPQCKQIDQSSSDQTRNEGEA), 2642 to 2678 (LSADSFESLPNTETDREPWDPVQAFSHAAPAQDRKRR), 2696 to 2731 (SSSSEIIEKKKDATRTPSSADPLAPDSPRSSAPVEE), 2765 to 2789 (PQETAEGIPPGSQDSSPEHQEPRTL), 2821 to 2852 (VQNSTSASGPKQDHVQCPEASTGFEEGRASPK), 2892 to 2955 (SKHS…PCRQ), 3124 to 3144 (NAQVCQTNPEPPATTQGPHTL), 3199 to 3241 (HTCS…GLDG), 3274 to 3412 (SLRQ…MPST), 3564 to 3611 (IALG…KGSA), 3766 to 3790 (SDTSTVSQEEGDVPGVPQKREAEET), 3830 to 3884 (LPSV…RVQK), 3906 to 3991 (ASTQ…SPKL), 4033 to 4086 (PEKV…QHLS), and 4153 to 4193 (PGGL…EWSK). Residues 2088–2100 (DQKEQEKTDHAFR) show a composition bias toward basic and acidic residues. Residues 2103 to 2118 (SSGNPLPSKDQPSSPR) are compositionally biased toward polar residues. Positions 2119–2129 (QTDDTVFRDSE) are enriched in basic and acidic residues. Positions 2137-2148 (SIGNHPQVQKIT) are enriched in polar residues. Over residues 2153 to 2169 (RSREGVRESEPVREHTH) the composition is skewed to basic and acidic residues. The segment covering 2254-2266 (ESQVAEHVSSSNQ) has biased composition (polar residues). Composition is skewed to basic and acidic residues over residues 2267-2279 (EEPKAQGKVEEMP) and 2379-2391 (EHQDQSTETRSHS). Basic and acidic residues predominate over residues 2500 to 2510 (QASKPRQKAEK). Positions 2642-2653 (LSADSFESLPNT) are enriched in polar residues. Low complexity predominate over residues 2712 to 2729 (PSSADPLAPDSPRSSAPV). Residues 2916-2925 (APCRHPREAL) show a composition bias toward basic and acidic residues. Residues 3124–3141 (NAQVCQTNPEPPATTQGP) are compositionally biased toward polar residues. Polar residues-rich tracts occupy residues 3274 to 3285 (SLRQNETPQPAA), 3320 to 3339 (SSPTPQFSVVGSSRSLQELN), and 3368 to 3387 (SGKSVARTSLQAEDSNQKAS). The segment covering 3388–3397 (SRLDDGTTDH) has biased composition (basic and acidic residues). The segment covering 3857–3872 (SSPSPSSPHSPGLFPS) has biased composition (low complexity). Residues 3906–3924 (ASTQEPGLSPGSLTLSAPS) are compositionally biased toward polar residues. Over residues 3958–3975 (LGGSQRGRSSLQRSNGRS) the composition is skewed to low complexity. The segment covering 4048-4065 (EPSQWQSRTENGGESSAS) has biased composition (polar residues). The stretch at 4334-4387 (SDIELMLQDYQQAHEEAKVEIARARDQLRERTEQEKLRIHQKIISQLLKEEDKL) forms a coiled coil. Over residues 4397–4411 (CTSSNGSLSSGMTSG) the composition is skewed to low complexity. A disordered region spans residues 4397-4419 (CTSSNGSLSSGMTSGYNSSPALS). The 218-residue stretch at 4483–4700 (SYQDLAKHVV…IARLASFLGR (218 aa)) folds into the START domain.

Belongs to the TRAFAC class myosin-kinesin ATPase superfamily. Kinesin family. In terms of assembly, interacts with ATAD3A. In terms of tissue distribution, expressed in the central nervous system, muscle cells (heart and skeletal muscle), pancreas, prostate and lung.

It localises to the cytoplasm. The protein resides in the cytoskeleton. It is found in the microtubule organizing center. The protein localises to the centrosome. Its subcellular location is the centriole. It localises to the nucleus. In terms of biological role, microtubule-dependent motor protein required for spindle pole assembly during mitosis. Required to stabilize the pericentriolar material (PCM). The polypeptide is StAR-related lipid transfer protein 9 (STARD9) (Homo sapiens (Human)).